The chain runs to 175 residues: Major MR/P fimbria protein (175 aa).

An N-terminal signal peptide occupies residues 1 to 23 (MKLNKLALVLGLGLSVVAGSALA). The cysteines at positions 42 and 81 are disulfide-linked.

This sequence belongs to the fimbrial protein family.

The protein localises to the fimbrium. Its function is as follows. Major structural component of mannose-resistant/proteus-like fimbriae of P.mirabilis. This is Major MR/P fimbria protein (mrpA) from Proteus mirabilis (strain HI4320).